A 210-amino-acid polypeptide reads, in one-letter code: Urease accessory protein UreF (210 aa).

Belongs to the UreF family. UreD, UreF and UreG form a complex that acts as a GTP-hydrolysis-dependent molecular chaperone, activating the urease apoprotein by helping to assemble the nickel containing metallocenter of UreC. The UreE protein probably delivers the nickel.

Its subcellular location is the cytoplasm. Its function is as follows. Required for maturation of urease via the functional incorporation of the urease nickel metallocenter. The chain is Urease accessory protein UreF from Dinoroseobacter shibae (strain DSM 16493 / NCIMB 14021 / DFL 12).